The following is a 465-amino-acid chain: MSASLARGMLHKMGGSCCPHHAPTTNPFRMAKLHGNNKSTDYAFEMVCSTLRFGKGVTLEIGYDVRNLGAKKTLLITDKNVQNTIAFKNAEQALKMVNIEYEIFDDVLIEPSEKSMQKAIAFAKSKPFDSFIAVGGGSVIDTTKAAALYASNPEADFLDFVGPPFGKSLQPKNPMLPLIAVPTTAGTGSETTAAAIMDLPEHKCKTGIRLRCIKPYLAVVDPLNVMSMPRNVAIYSGFDVLCHALESYTALPYDQRSPRPARPEVRPVYQGSNPISDVWSREALRIIGQYFRRSVFDPSDEEARTEMLKASSFAGIGFGNAGVHLCHGLSYPISSQAKGCVAHDYPQDKNLIPHGLSVMTTAVADFEFTTAACPDRHLVAAQTLGADIPNNADNEYISRTLCDQLRGFMKDFGVPNGLKGMGFEYSDIDHLTEAASHSVPNIVISPKSTDRDIISKLYEKSLTVY.

It belongs to the iron-containing alcohol dehydrogenase family. Hydroxyacid-oxoacid transhydrogenase subfamily.

It localises to the mitochondrion. The enzyme catalyses (S)-3-hydroxybutanoate + 2-oxoglutarate = (R)-2-hydroxyglutarate + acetoacetate. The catalysed reaction is 4-hydroxybutanoate + 2-oxoglutarate = (R)-2-hydroxyglutarate + succinate semialdehyde. Functionally, catalyzes the cofactor-independent reversible oxidation of gamma-hydroxybutyrate (GHB) to succinic semialdehyde (SSA) coupled to reduction of 2-ketoglutarate (2-KG) to D-2-hydroxyglutarate (D-2-HG). L-3-hydroxybutyrate (L-3-OHB) is also a substrate for HOT when using 2-KG as hydrogen acceptor, resulting in the formation of D-2-HG. The protein is Hydroxyacid-oxoacid transhydrogenase, mitochondrial of Caenorhabditis briggsae.